The chain runs to 230 residues: Octanoyltransferase (230 aa).

Positions 40-218 (PSLDDVLILL…CFAEVFGVEL (179 aa)) constitute a BPL/LPL catalytic domain. Substrate is bound by residues 82–89 (RGGEVTYH), 149–151 (AIG), and 162–164 (GFA). Cys180 functions as the Acyl-thioester intermediate in the catalytic mechanism.

This sequence belongs to the LipB family.

The protein resides in the cytoplasm. It carries out the reaction octanoyl-[ACP] + L-lysyl-[protein] = N(6)-octanoyl-L-lysyl-[protein] + holo-[ACP] + H(+). The protein operates within protein modification; protein lipoylation via endogenous pathway; protein N(6)-(lipoyl)lysine from octanoyl-[acyl-carrier-protein]: step 1/2. In terms of biological role, catalyzes the transfer of endogenously produced octanoic acid from octanoyl-acyl-carrier-protein onto the lipoyl domains of lipoate-dependent enzymes. Lipoyl-ACP can also act as a substrate although octanoyl-ACP is likely to be the physiological substrate. The polypeptide is Octanoyltransferase (Nostoc punctiforme (strain ATCC 29133 / PCC 73102)).